The primary structure comprises 364 residues: Chorismate synthase (364 aa).

The disordered stretch occupies residues 41-60; it reads MQHDLDRRRPGTSRYTTARR. NADP(+) contacts are provided by Arg48 and Arg54. Residues 125-127, 238-239, Gly278, 293-297, and Arg319 each bind FMN; these read RSS, NA, and KPTSS.

This sequence belongs to the chorismate synthase family. In terms of assembly, homotetramer. The cofactor is FMNH2.

It catalyses the reaction 5-O-(1-carboxyvinyl)-3-phosphoshikimate = chorismate + phosphate. It functions in the pathway metabolic intermediate biosynthesis; chorismate biosynthesis; chorismate from D-erythrose 4-phosphate and phosphoenolpyruvate: step 7/7. Functionally, catalyzes the anti-1,4-elimination of the C-3 phosphate and the C-6 proR hydrogen from 5-enolpyruvylshikimate-3-phosphate (EPSP) to yield chorismate, which is the branch point compound that serves as the starting substrate for the three terminal pathways of aromatic amino acid biosynthesis. This reaction introduces a second double bond into the aromatic ring system. This chain is Chorismate synthase, found in Shewanella baltica (strain OS223).